The following is a 316-amino-acid chain: MRSVDSRSSVTRWVCLTSVILFCFCIAVMRYGGVKKRRYFYGFCLHPRERADITEVILRFPREERNASRELRWVKKDRQWFIQLAHAIHPAKQEVLERLFQYLFTKRRFEFITNNTRFFSDYALGKQPAVQMKFTKKNGAAIGDIYFGALNGTGLGRYIRIGDNAAVFLTEDDFTPFFRDEKRFWCDTRQFHELFTQSQIQMMEVSGKYIVRSRTSVVFKEVEQFFARFSYVDVGPTPTQWKESIVIHRGDGKIIRFRLQPAAHQEWTLWDAQSVHAYTLSAYTARYLFALISRMQTETGMSSLQQFDTEENLISD.

Residues 12–34 traverse the membrane as a helical segment; that stretch reads RWVCLTSVILFCFCIAVMRYGGV.

The protein localises to the membrane. This is an uncharacterized protein from Treponema pallidum (strain Nichols).